We begin with the raw amino-acid sequence, 86 residues long: MEPTKDETHAIVEFVDVLLRDGAVIQADVIVTVADIPLLGISLRAAIAGMTTMTAYGMFENWDATHRQRSMTGGRTIPVPNEKNGK.

It belongs to the gas vesicle GvpA family. As to quaternary structure, gvpF to GvpM interact with each other in vitro, and may form multi-subunit complex(es). Might interact with GvpA.

The protein resides in the gas vesicle. In terms of biological role, proteins GvpF to GvpM might be involved in nucleating gas vesicle formation. A minor component of the gas vesicle. Gas vesicles are small, hollow, gas filled protein structures found in some microorganisms. They allow positioning of halobacteria at the optimal depth for growth in the poorly aerated, shallow brine pools of their habitat. Functionally, expression of a 9.5 kb mc-vac DNA fragment containing 2 divergently transcribed regions (gvpD-gvpE-gvpF-gvpG-gvpH-gvpI-gvpJ-gvpK-gvpL-gvpM and gvpA-gvpC-gvpN-gvpO) allows H.volcanii to produce gas vesicles. The polypeptide is Gas vesicle protein M (Haloferax mediterranei (strain ATCC 33500 / DSM 1411 / JCM 8866 / NBRC 14739 / NCIMB 2177 / R-4) (Halobacterium mediterranei)).